The primary structure comprises 153 residues: Aspartate carbamoyltransferase regulatory chain (153 aa).

Residues Cys109, Cys114, Cys138, and Cys141 each coordinate Zn(2+).

The protein belongs to the PyrI family. In terms of assembly, contains catalytic and regulatory chains. The cofactor is Zn(2+).

Its function is as follows. Involved in allosteric regulation of aspartate carbamoyltransferase. The protein is Aspartate carbamoyltransferase regulatory chain of Salmonella arizonae (strain ATCC BAA-731 / CDC346-86 / RSK2980).